Here is a 369-residue protein sequence, read N- to C-terminus: Tyrosine-protein phosphatase non-receptor type 5 (369 aa).

Ser49 carries the post-translational modification Phosphoserine; by PKA. Thr59 is subject to Phosphothreonine; by MAPK. At Ser72 the chain carries Phosphoserine; by MAPK. The region spanning 104 to 359 is the Tyrosine-protein phosphatase domain; sequence LQAEFFEIPM…QFVHHAMSLY (256 aa). Residues Asp265, 300 to 306, and Gln344 each bind substrate; that span reads CSAGIGR. The active-site Phosphocysteine intermediate is Cys300.

It belongs to the protein-tyrosine phosphatase family. Non-receptor class subfamily. Phosphorylation at Ser-49 by PKA deactivates PTPN5. Phosphorylation at Thr-59 and Ser-72 by MAPKs stabilizes the phosphatase, dephosphorylation of these sites results in ubiquitin-mediated degradation of the active phosphatase. Expressed in the central nervous system except in the cerebellum. Enriched within the striatum relative to other brain areas.

It localises to the cytoplasm. The enzyme catalyses O-phospho-L-tyrosyl-[protein] + H2O = L-tyrosyl-[protein] + phosphate. In terms of biological role, may regulate the activity of several effector molecules involved in synaptic plasticity and neuronal cell survival, including MAPKs, Src family kinases and NMDA receptors. This Rattus norvegicus (Rat) protein is Tyrosine-protein phosphatase non-receptor type 5 (Ptpn5).